Reading from the N-terminus, the 206-residue chain is tRNA(Phe) 7-((3-amino-3-carboxypropyl)-4-demethylwyosine(37)-N(4))-methyltransferase 2 (206 aa).

It belongs to the TYW3 family.

The enzyme catalyses 4-demethyl-7-[(3S)-3-amino-3-carboxypropyl]wyosine(37) in tRNA(Phe) + S-adenosyl-L-methionine = 7-[(3S)-3-amino-3-carboxypropyl]wyosine(37) in tRNA(Phe) + S-adenosyl-L-homocysteine + H(+). Functionally, S-adenosyl-L-methionine-dependent methyltransferase that acts as a component of the wyosine derivatives biosynthesis pathway. Probably methylates N-4 position of wybutosine-86 to produce wybutosine-72. This chain is tRNA(Phe) 7-((3-amino-3-carboxypropyl)-4-demethylwyosine(37)-N(4))-methyltransferase 2, found in Pyrococcus furiosus (strain ATCC 43587 / DSM 3638 / JCM 8422 / Vc1).